Reading from the N-terminus, the 92-residue chain is Small ribosomal subunit protein uS19 (92 aa).

It belongs to the universal ribosomal protein uS19 family.

In terms of biological role, protein S19 forms a complex with S13 that binds strongly to the 16S ribosomal RNA. This is Small ribosomal subunit protein uS19 from Orientia tsutsugamushi (strain Boryong) (Rickettsia tsutsugamushi).